The primary structure comprises 556 residues: Glucose-6-phosphate isomerase (556 aa).

E360 functions as the Proton donor in the catalytic mechanism. Catalysis depends on residues H391 and K519.

It belongs to the GPI family.

It localises to the cytoplasm. The enzyme catalyses alpha-D-glucose 6-phosphate = beta-D-fructose 6-phosphate. It participates in carbohydrate biosynthesis; gluconeogenesis. The protein operates within carbohydrate degradation; glycolysis; D-glyceraldehyde 3-phosphate and glycerone phosphate from D-glucose: step 2/4. Functionally, catalyzes the reversible isomerization of glucose-6-phosphate to fructose-6-phosphate. The chain is Glucose-6-phosphate isomerase from Acinetobacter baumannii (strain SDF).